The chain runs to 73 residues: Translation initiation factor IF-1 (73 aa).

The S1-like domain occupies 1 to 72 (MAKEDAIEVE…NRGRITYRSK (72 aa)).

Belongs to the IF-1 family. As to quaternary structure, component of the 30S ribosomal translation pre-initiation complex which assembles on the 30S ribosome in the order IF-2 and IF-3, IF-1 and N-formylmethionyl-tRNA(fMet); mRNA recruitment can occur at any time during PIC assembly.

The protein localises to the cytoplasm. Its function is as follows. One of the essential components for the initiation of protein synthesis. Stabilizes the binding of IF-2 and IF-3 on the 30S subunit to which N-formylmethionyl-tRNA(fMet) subsequently binds. Helps modulate mRNA selection, yielding the 30S pre-initiation complex (PIC). Upon addition of the 50S ribosomal subunit IF-1, IF-2 and IF-3 are released leaving the mature 70S translation initiation complex. The sequence is that of Translation initiation factor IF-1 from Syntrophobacter fumaroxidans (strain DSM 10017 / MPOB).